The sequence spans 201 residues: Ras-related protein Rab-5A (201 aa).

GTP-binding positions include Gly-16–Ser-24, Leu-35–Thr-41, Asp-64–Gln-68, Asn-122–Asp-125, and Ser-152–Lys-154. The short motif at Gln-38–Phe-46 is the Effector region element. S-geranylgeranyl cysteine attachment occurs at residues Cys-199 and Cys-200.

This sequence belongs to the small GTPase superfamily. Rab family.

Its subcellular location is the cell membrane. The protein localises to the endosome membrane. Its activity is regulated as follows. Regulated by guanine nucleotide exchange factors (GEFs) which promote the exchange of bound GDP for free GTP. Functionally, required for the fusion of plasma membranes and early endosomes. The protein is Ras-related protein Rab-5A (rab5A) of Dictyostelium discoideum (Social amoeba).